The chain runs to 454 residues: Allantoinase (454 aa).

Zn(2+) is bound by residues H58, H60, K149, H189, H245, and D318. K149 carries the N6-carboxylysine modification.

This sequence belongs to the metallo-dependent hydrolases superfamily. Allantoinase family. In terms of assembly, homotetramer. It depends on Zn(2+) as a cofactor. In terms of processing, carboxylation allows a single lysine to coordinate two zinc ions.

The enzyme catalyses (S)-allantoin + H2O = allantoate + H(+). It participates in nitrogen metabolism; (S)-allantoin degradation; allantoate from (S)-allantoin: step 1/1. Catalyzes the conversion of allantoin (5-ureidohydantoin) to allantoic acid by hydrolytic cleavage of the five-member hydantoin ring. This Enterococcus faecalis (strain ATCC 700802 / V583) protein is Allantoinase.